Reading from the N-terminus, the 576-residue chain is Probable proline--tRNA ligase, mitochondrial (576 aa).

Belongs to the class-II aminoacyl-tRNA synthetase family.

It localises to the mitochondrion. The enzyme catalyses tRNA(Pro) + L-proline + ATP = L-prolyl-tRNA(Pro) + AMP + diphosphate. This is Probable proline--tRNA ligase, mitochondrial (AIM10) from Saccharomyces cerevisiae (strain ATCC 204508 / S288c) (Baker's yeast).